The following is a 173-amino-acid chain: RNA pyrophosphohydrolase (173 aa).

The Nudix hydrolase domain maps to 11–164 (PYRKCVGIVV…KKHVYMKVVS (154 aa)). The short motif at 52-73 (GGIDEDEKPLDAAYRELYEETG) is the Nudix box element.

The protein belongs to the Nudix hydrolase family. RppH subfamily. A divalent metal cation serves as cofactor.

Accelerates the degradation of transcripts by removing pyrophosphate from the 5'-end of triphosphorylated RNA, leading to a more labile monophosphorylated state that can stimulate subsequent ribonuclease cleavage. The chain is RNA pyrophosphohydrolase from Bartonella tribocorum (strain CIP 105476 / IBS 506).